We begin with the raw amino-acid sequence, 382 residues long: Galactokinase (382 aa).

34–37 (EHTD) is a binding site for substrate. An ATP-binding site is contributed by 124-130 (GAGLSSS). 2 residues coordinate Mg(2+): S130 and E162. D174 functions as the Proton acceptor in the catalytic mechanism. Y223 is a substrate binding site.

It belongs to the GHMP kinase family. GalK subfamily.

It localises to the cytoplasm. It catalyses the reaction alpha-D-galactose + ATP = alpha-D-galactose 1-phosphate + ADP + H(+). The protein operates within carbohydrate metabolism; galactose metabolism. Catalyzes the transfer of the gamma-phosphate of ATP to D-galactose to form alpha-D-galactose-1-phosphate (Gal-1-P). This chain is Galactokinase, found in Cronobacter sakazakii (strain ATCC BAA-894) (Enterobacter sakazakii).